Here is a 327-residue protein sequence, read N- to C-terminus: GMP reductase (327 aa).

Residue Cys176 is the Thioimidate intermediate of the active site. 205-228 (IIADGGIRTHGDIAKSIRFGASMV) serves as a coordination point for NADP(+).

This sequence belongs to the IMPDH/GMPR family. GuaC type 2 subfamily.

The catalysed reaction is IMP + NH4(+) + NADP(+) = GMP + NADPH + 2 H(+). Catalyzes the irreversible NADPH-dependent deamination of GMP to IMP. It functions in the conversion of nucleobase, nucleoside and nucleotide derivatives of G to A nucleotides, and in maintaining the intracellular balance of A and G nucleotides. This is GMP reductase from Streptococcus pyogenes serotype M3 (strain ATCC BAA-595 / MGAS315).